The sequence spans 151 residues: MGSDDLSAGDKIQKGFQINYMILRDADTGKVIWQENKDFSAPDVEHEARVPVKILDMRAVSREINFSTIESMENFRLDQKVLFKGRIMEEWFFEMGFVGANTTNTWQSTIEAAPESQMMPAKVLNGNVTIQTSFYDNEILITKSVVRLYYI.

This sequence belongs to the PDE6D/unc-119 family. Interacts with Pde6.

It is found in the nucleus. Its subcellular location is the cytoplasm. The protein is Probable cGMP 3',5'-cyclic phosphodiesterase subunit delta of Drosophila mojavensis (Fruit fly).